A 381-amino-acid chain; its full sequence is Queuine tRNA-ribosyltransferase (381 aa).

The Proton acceptor role is filled by Asp-92. Substrate-binding positions include 92-96, Asp-146, Gln-190, and Gly-217; that span reads DSGGF. Positions 248 to 254 are RNA binding; that stretch reads GVGRPED. Asp-267 acts as the Nucleophile in catalysis. Residues 272–276 are RNA binding; important for wobble base 34 recognition; that stretch reads TRNAR. Cys-305, Cys-307, Cys-310, and His-337 together coordinate Zn(2+).

It belongs to the queuine tRNA-ribosyltransferase family. Homodimer. Within each dimer, one monomer is responsible for RNA recognition and catalysis, while the other monomer binds to the replacement base PreQ1. Requires Zn(2+) as cofactor.

The enzyme catalyses 7-aminomethyl-7-carbaguanine + guanosine(34) in tRNA = 7-aminomethyl-7-carbaguanosine(34) in tRNA + guanine. It participates in tRNA modification; tRNA-queuosine biosynthesis. Functionally, catalyzes the base-exchange of a guanine (G) residue with the queuine precursor 7-aminomethyl-7-deazaguanine (PreQ1) at position 34 (anticodon wobble position) in tRNAs with GU(N) anticodons (tRNA-Asp, -Asn, -His and -Tyr). Catalysis occurs through a double-displacement mechanism. The nucleophile active site attacks the C1' of nucleotide 34 to detach the guanine base from the RNA, forming a covalent enzyme-RNA intermediate. The proton acceptor active site deprotonates the incoming PreQ1, allowing a nucleophilic attack on the C1' of the ribose to form the product. After dissociation, two additional enzymatic reactions on the tRNA convert PreQ1 to queuine (Q), resulting in the hypermodified nucleoside queuosine (7-(((4,5-cis-dihydroxy-2-cyclopenten-1-yl)amino)methyl)-7-deazaguanosine). The sequence is that of Queuine tRNA-ribosyltransferase from Xanthomonas axonopodis pv. citri (strain 306).